The primary structure comprises 160 residues: MSTLKKPDLSDPKLRAKLAKGMGHNYYGEPAWPNDLLYIFPVVILGTIACVVGLAVLDPAMLGDKANPFATPLEILPEWYLYPVFQILRVVPNKLLGIALQTLIPLGLMILPFIENVNKFSNPFRRPIAMSLFLFGTFLTIYLGIGACLPIDKSLTLGLF.

3 helical membrane passes run 36-56 (LLYI…GLAV), 95-115 (LLGI…PFIE), and 128-148 (IAMS…IGAC).

It belongs to the cytochrome b family. PetD subfamily. As to quaternary structure, the 4 large subunits of the cytochrome b6-f complex are cytochrome b6, subunit IV (17 kDa polypeptide, PetD), cytochrome f and the Rieske protein, while the 4 small subunits are PetG, PetL, PetM and PetN. The complex functions as a dimer.

It localises to the cellular thylakoid membrane. Component of the cytochrome b6-f complex, which mediates electron transfer between photosystem II (PSII) and photosystem I (PSI), cyclic electron flow around PSI, and state transitions. The chain is Cytochrome b6-f complex subunit 4 from Prochlorococcus marinus (strain MIT 9312).